We begin with the raw amino-acid sequence, 374 residues long: Dihydrolipoyllysine-residue acetyltransferase component of acetoin cleaving system (374 aa).

Residues 9–84 (IIPIVMPKWG…PVKALLGVLA (76 aa)) enclose the Lipoyl-binding domain. At Lys50 the chain carries N6-lipoyllysine. The AB hydrolase-1 domain maps to 137–360 (TVLFIHGFGG…DAGHMSQMEK (224 aa)).

The cofactor is (R)-lipoate.

The enzyme catalyses N(6)-[(R)-dihydrolipoyl]-L-lysyl-[protein] + acetyl-CoA = N(6)-[(R)-S(8)-acetyldihydrolipoyl]-L-lysyl-[protein] + CoA. It participates in ketone degradation; acetoin degradation. In terms of biological role, dihydrolipoamide acetyltransferase involved in acetoin catabolism. This Cupriavidus necator (strain ATCC 17699 / DSM 428 / KCTC 22496 / NCIMB 10442 / H16 / Stanier 337) (Ralstonia eutropha) protein is Dihydrolipoyllysine-residue acetyltransferase component of acetoin cleaving system (acoC).